The sequence spans 261 residues: Guanine nucleotide exchange factor BopE (261 aa).

The protein belongs to the GEF (guanine exchange factor) SopE family. In terms of assembly, monomer. Interacts with human CDC42.

The protein resides in the secreted. Activator for both CDC42 and RAC1 by directly interacting with these Rho GTPases and acting as a guanine nucleotide exchange factor (GEF). This activation results in actin cytoskeleton rearrangements and stimulates membrane ruffling, thus promoting bacterial entry into non-phagocytic cells. This Burkholderia pseudomallei (strain 1710b) protein is Guanine nucleotide exchange factor BopE (bopE).